The following is a 486-amino-acid chain: UDP-N-acetylmuramoyl-L-alanyl-D-glutamate--2,6-diaminopimelate ligase (486 aa).

Ser34 provides a ligand contact to UDP-N-acetyl-alpha-D-muramoyl-L-alanyl-D-glutamate. 112–118 is an ATP binding site; that stretch reads GTAGKTS. Residues 154 to 155, Ser181, Gln187, and Arg189 contribute to the UDP-N-acetyl-alpha-D-muramoyl-L-alanyl-D-glutamate site; that span reads TT. Position 221 is an N6-carboxylysine (Lys221). Residues Arg385, 409–412, Gly457, and Glu461 contribute to the meso-2,6-diaminopimelate site; that span reads DNPR. Positions 409–412 match the Meso-diaminopimelate recognition motif motif; it reads DNPR.

This sequence belongs to the MurCDEF family. MurE subfamily. The cofactor is Mg(2+). Carboxylation is probably crucial for Mg(2+) binding and, consequently, for the gamma-phosphate positioning of ATP.

The protein localises to the cytoplasm. The catalysed reaction is UDP-N-acetyl-alpha-D-muramoyl-L-alanyl-D-glutamate + meso-2,6-diaminopimelate + ATP = UDP-N-acetyl-alpha-D-muramoyl-L-alanyl-gamma-D-glutamyl-meso-2,6-diaminopimelate + ADP + phosphate + H(+). The protein operates within cell wall biogenesis; peptidoglycan biosynthesis. Its function is as follows. Catalyzes the addition of meso-diaminopimelic acid to the nucleotide precursor UDP-N-acetylmuramoyl-L-alanyl-D-glutamate (UMAG) in the biosynthesis of bacterial cell-wall peptidoglycan. In Rhizobium meliloti (strain 1021) (Ensifer meliloti), this protein is UDP-N-acetylmuramoyl-L-alanyl-D-glutamate--2,6-diaminopimelate ligase.